We begin with the raw amino-acid sequence, 150 residues long: SsrA-binding protein (150 aa).

Belongs to the SmpB family.

The protein localises to the cytoplasm. Its function is as follows. Required for rescue of stalled ribosomes mediated by trans-translation. Binds to transfer-messenger RNA (tmRNA), required for stable association of tmRNA with ribosomes. tmRNA and SmpB together mimic tRNA shape, replacing the anticodon stem-loop with SmpB. tmRNA is encoded by the ssrA gene; the 2 termini fold to resemble tRNA(Ala) and it encodes a 'tag peptide', a short internal open reading frame. During trans-translation Ala-aminoacylated tmRNA acts like a tRNA, entering the A-site of stalled ribosomes, displacing the stalled mRNA. The ribosome then switches to translate the ORF on the tmRNA; the nascent peptide is terminated with the 'tag peptide' encoded by the tmRNA and targeted for degradation. The ribosome is freed to recommence translation, which seems to be the essential function of trans-translation. In Campylobacter jejuni subsp. doylei (strain ATCC BAA-1458 / RM4099 / 269.97), this protein is SsrA-binding protein.